We begin with the raw amino-acid sequence, 872 residues long: MALPNKVKKLLSDAEQLSDYRDCSSYFYKWLFNEFSKQPVGNLINARAEFIDRLLIKLFHVYDLAHEPDLALIAVGGYGRGELHPYSDIDFLLLVTQQPNAEISEKIGQFVTMLWDLNLEIGHSVRTIAQAIEQKREDVTFATSLLESRLIFGNHIEFEKLKNHIIDTPVWRSNEFFLAKVQEQHLRHRKCHGTAYNLEPNIKENPGGLRDLQTIIWVAKKHFRAETLQELISHGYLTHEEFQELSECLENLWNIRFALHLAAGRSENRLLFDHQPQAAEILGFGSDGKSSVERMMKRLFRIMSRVRELNLMLLAYFEQSISPKHHQPIIQELDRNFERIGNQIKVKSPSVFFRRDQLFMLFEHIADNPEITHIYPSTIRTIRQVRRRLLGDLQDYAACREAFLRLIKHPNGMGRAFTLMHKHGMLAAYLPQWRNIFGQMQFDLFHAYTVDEHTHRLINNIYQYFDKTGVSEFPICSEIVTRMDKPELLYLAGIFHDIAKGRGGDHSELGAVDALAFAKLHAFSVADGKLIAWLVSNHLLMSVTAQRKDINDPGVIKDFATRVKTERQLDYLYCLTVADIRATNDNLWNDWKNTLLRELYLHTQHALRLGLENPMDQRDQIRDKKHQAKQRLLNLGYMEDQIDLIWSRFKANYFTAFSEQQISWHSQHLVNSEDLSQPSVIVSNKAMHGGTQVFVYSPYSGPLFARLVSVIGSKKAQIQHAQVLTTKDGYVLFNFVILEVNGEPIASGRAQSIKRALEQALFEPRKKIRFKKNRSQRFKDFNIKPKIVLRPHPRKDRSLIEIQAIDIPGLLTKIAEVFQAHLLHIHAARITTVGQRAEDFFVVSNNEYQALTDEEQAKIHQALRKKLNAETE.

Positions Met1–Glu332 are uridylyltransferase. A uridylyl-removing region spans residues Leu333 to Thr691. The HD domain maps to Val450–Leu572. ACT domains lie at Gln692–Asn773 and Leu799–Glu872.

This sequence belongs to the GlnD family. Requires Mg(2+) as cofactor.

It catalyses the reaction [protein-PII]-L-tyrosine + UTP = [protein-PII]-uridylyl-L-tyrosine + diphosphate. The catalysed reaction is [protein-PII]-uridylyl-L-tyrosine + H2O = [protein-PII]-L-tyrosine + UMP + H(+). With respect to regulation, uridylyltransferase (UTase) activity is inhibited by glutamine, while glutamine activates uridylyl-removing (UR) activity. In terms of biological role, modifies, by uridylylation and deuridylylation, the PII regulatory proteins (GlnB and homologs), in response to the nitrogen status of the cell that GlnD senses through the glutamine level. Under low glutamine levels, catalyzes the conversion of the PII proteins and UTP to PII-UMP and PPi, while under higher glutamine levels, GlnD hydrolyzes PII-UMP to PII and UMP (deuridylylation). Thus, controls uridylylation state and activity of the PII proteins, and plays an important role in the regulation of nitrogen assimilation and metabolism. This Pseudoalteromonas translucida (strain TAC 125) protein is Bifunctional uridylyltransferase/uridylyl-removing enzyme.